Reading from the N-terminus, the 380-residue chain is Cytochrome b (380 aa).

Transmembrane regions (helical) follow at residues 34 to 54 (FGSL…LLAA), 78 to 99 (WLIR…YLHI), 114 to 134 (WNIG…GYVL), and 179 to 199 (FFAL…VHLT). 2 residues coordinate heme b: H84 and H98. The heme b site is built by H183 and H197. H202 provides a ligand contact to a ubiquinone. 4 helical membrane passes run 227-247 (IKDI…ALFS), 289-309 (LGGV…PLLH), 321-341 (LSQI…WVGS), and 348-368 (FIII…VLFP).

Belongs to the cytochrome b family. The cytochrome bc1 complex contains 11 subunits: 3 respiratory subunits (MT-CYB, CYC1 and UQCRFS1), 2 core proteins (UQCRC1 and UQCRC2) and 6 low-molecular weight proteins (UQCRH/QCR6, UQCRB/QCR7, UQCRQ/QCR8, UQCR10/QCR9, UQCR11/QCR10 and a cleavage product of UQCRFS1). This cytochrome bc1 complex then forms a dimer. Heme b is required as a cofactor.

Its subcellular location is the mitochondrion inner membrane. Functionally, component of the ubiquinol-cytochrome c reductase complex (complex III or cytochrome b-c1 complex) that is part of the mitochondrial respiratory chain. The b-c1 complex mediates electron transfer from ubiquinol to cytochrome c. Contributes to the generation of a proton gradient across the mitochondrial membrane that is then used for ATP synthesis. In Paradisaea rubra (Red bird of paradise), this protein is Cytochrome b (MT-CYB).